The following is an 84-amino-acid chain: MFNMENSAAKEKTAARQQLFDLEQDMHDLTKAHEINTNVQSKVQKVTASLREGASKESFEKQHTLLAGYVALQKVLGRINRKMV.

It belongs to the chlamydial CPn_0711/CT_665/TC_0036 family.

This is an uncharacterized protein from Chlamydia muridarum (strain MoPn / Nigg).